A 586-amino-acid chain; its full sequence is Asparagine synthetase [glutamine-hydrolyzing] (586 aa).

Cysteine 2 acts as the For GATase activity in catalysis. The region spanning 2–185 (CGILAVLGVV…PGHLYSSKTG (184 aa)) is the Glutamine amidotransferase type-2 domain. L-glutamine contacts are provided by residues 50–54 (RLAII), 75–77 (NGE), and aspartate 98. The Asparagine synthetase domain maps to 193-516 (PPWFSETVPS…PQDSARETVP (324 aa)). Residues leucine 231, isoleucine 267, and 341–342 (SG) each bind ATP.

The enzyme catalyses L-aspartate + L-glutamine + ATP + H2O = L-asparagine + L-glutamate + AMP + diphosphate + H(+). Its pathway is amino-acid biosynthesis; L-asparagine biosynthesis; L-asparagine from L-aspartate (L-Gln route): step 1/1. Its function is as follows. Essential for nitrogen assimilation, distribution and remobilization within the plant via the phloem. In Zea mays (Maize), this protein is Asparagine synthetase [glutamine-hydrolyzing] (ASN1).